The sequence spans 92 residues: Co-chaperonin GroES (92 aa).

The protein belongs to the GroES chaperonin family. As to quaternary structure, heptamer of 7 subunits arranged in a ring. Interacts with the chaperonin GroEL.

The protein localises to the cytoplasm. Together with the chaperonin GroEL, plays an essential role in assisting protein folding. The GroEL-GroES system forms a nano-cage that allows encapsulation of the non-native substrate proteins and provides a physical environment optimized to promote and accelerate protein folding. GroES binds to the apical surface of the GroEL ring, thereby capping the opening of the GroEL channel. The polypeptide is Co-chaperonin GroES (Thermotoga neapolitana).